We begin with the raw amino-acid sequence, 448 residues long: Bifunctional protein GlmU (448 aa).

The pyrophosphorylase stretch occupies residues 1–232 (MTARSSLTIV…EDEVRGINTK (232 aa)). Residues 11-14 (LAAG), K25, Q78, and 83-84 (GT) each bind UDP-N-acetyl-alpha-D-glucosamine. D108 lines the Mg(2+) pocket. Residues G144, E158, N173, and N230 each contribute to the UDP-N-acetyl-alpha-D-glucosamine site. N230 lines the Mg(2+) pocket. A linker region spans residues 233 to 253 (AQLAQAEAAMQARLRQAAMDA). The tract at residues 254 to 448 (GVTLIAPETV…FRNAKLRQTK (195 aa)) is N-acetyltransferase. Residues R319 and K337 each contribute to the UDP-N-acetyl-alpha-D-glucosamine site. H349 (proton acceptor) is an active-site residue. Residues Y352 and N363 each contribute to the UDP-N-acetyl-alpha-D-glucosamine site. Residues A366, 372 to 373 (NY), S409, and R426 each bind acetyl-CoA. The tract at residues 427 to 448 (SPQTTKEGAAARFRNAKLRQTK) is disordered.

It in the N-terminal section; belongs to the N-acetylglucosamine-1-phosphate uridyltransferase family. This sequence in the C-terminal section; belongs to the transferase hexapeptide repeat family. Homotrimer. It depends on Mg(2+) as a cofactor.

Its subcellular location is the cytoplasm. It carries out the reaction alpha-D-glucosamine 1-phosphate + acetyl-CoA = N-acetyl-alpha-D-glucosamine 1-phosphate + CoA + H(+). The enzyme catalyses N-acetyl-alpha-D-glucosamine 1-phosphate + UTP + H(+) = UDP-N-acetyl-alpha-D-glucosamine + diphosphate. The protein operates within nucleotide-sugar biosynthesis; UDP-N-acetyl-alpha-D-glucosamine biosynthesis; N-acetyl-alpha-D-glucosamine 1-phosphate from alpha-D-glucosamine 6-phosphate (route II): step 2/2. It functions in the pathway nucleotide-sugar biosynthesis; UDP-N-acetyl-alpha-D-glucosamine biosynthesis; UDP-N-acetyl-alpha-D-glucosamine from N-acetyl-alpha-D-glucosamine 1-phosphate: step 1/1. It participates in bacterial outer membrane biogenesis; LPS lipid A biosynthesis. Its function is as follows. Catalyzes the last two sequential reactions in the de novo biosynthetic pathway for UDP-N-acetylglucosamine (UDP-GlcNAc). The C-terminal domain catalyzes the transfer of acetyl group from acetyl coenzyme A to glucosamine-1-phosphate (GlcN-1-P) to produce N-acetylglucosamine-1-phosphate (GlcNAc-1-P), which is converted into UDP-GlcNAc by the transfer of uridine 5-monophosphate (from uridine 5-triphosphate), a reaction catalyzed by the N-terminal domain. The protein is Bifunctional protein GlmU of Bradyrhizobium sp. (strain ORS 278).